The sequence spans 662 residues: MVHVRYGGQNGEQYELAISENHIVVRTESRSSLISDRPFEAAPVSSQARNILNQFELSTRFSQAGVEVLHVKEPSQDGALRDTAREILNQEPEVQFAGRVLIDPVSQQPIVYTENLFVKFGHEEDVSFCQEILGRYGLTIKRQLEYARNAYFVSAPPNTGLAIFDIAERLLNEESVELCHPELVREFRQRQAFSQQWHLKETTIGGKTIKAHANVEAAWKLSDGTGTIIAIIDDGVDVDHEEFRSSGKIVAPRDVTRKTNFPTPGNRDNHGTACAGVACGNGNFGASGVAPGAKLMPIRFVSALGSQDEADSFVWAAQNGADVISCSWGPPDGTWWDDKDPLHKQKVPLPDSTRLAMDYAINKGRNGKGCVILFAAGNGNESVDNDGYASYEKVIAVAACNDFGTRSAYSDFGQAVWCAFPSNNGNPSQTPGIWTADRSGVVGYNSGSTNLGDQAGNYTNSFGGTSSACPGAAGVAALILSRNPNLRWDEVRDIIKRSCDRIDPVGGNYNAEGRSPFYGYGRINALKAVELALPAQPEPVSIFTAVQDVPINDLQTSQLSLAIANTNPIKSIKVTVDIEHTYIGDLIVSLNPPGECGVLPIILHDRKGGGADDIKQTYDEVSTPGLTALKGKIPQGTWTLEVADKAQADTGKIRSLTIELGF.

Residues 196-529 (QWHLKETTIG…YGRINALKAV (334 aa)) form the Peptidase S8 domain. Catalysis depends on charge relay system residues D233, H270, and S466. One can recognise a P/Homo B domain in the interval 535–662 (AQPEPVSIFT…IRSLTIELGF (128 aa)).

The protein belongs to the peptidase S8 family.

The protein localises to the cytoplasm. Degrades phycobiliproteins in vitro. Has a substrate specificity similar to that of trypsin. The sequence is that of Calcium-dependent protease (prcA) from Nostoc sp. (strain PCC 7120 / SAG 25.82 / UTEX 2576).